The following is a 721-amino-acid chain: Translation initiation factor eIF2B subunit epsilon (721 aa).

Residues 1–13 show a composition bias toward low complexity; sequence MAAPVVAPPGVVV. Residues 1-40 are disordered; the sequence is MAAPVVAPPGVVVSRANKRSGAGPGGSGGGGARGAEEEPP. At Ala2 the chain carries N-acetylalanine. The residue at position 19 (Arg19) is an Omega-N-methylarginine. A compositionally biased stretch (gly residues) spans 22-33; sequence AGPGGSGGGGAR. Ser27 carries the phosphoserine modification. Residues Lys61 and Lys103 each participate in a glycyl lysine isopeptide (Lys-Gly) (interchain with G-Cter in ubiquitin) cross-link. Ser130 carries the post-translational modification Phosphoserine. Glycyl lysine isopeptide (Lys-Gly) (interchain with G-Cter in ubiquitin) cross-links involve residues Lys141 and Lys217. A Phosphothreonine modification is found at Thr322. Disordered regions lie at residues 444–483 and 523–547; these read PEGSVISLHPPDAEEDEDDGEFSDDSGADQEKDKVKMKGY and EESESESEQSMDSEEPDSRGGSPQM. Phosphoserine is present on residues Ser450, Ser466, Ser469, Ser532, and Ser540. 2 stretches are compositionally biased toward acidic residues: residues 456-471 and 523-537; these read AEEDEDDGEFSDDSGA and EESESESEQSMDSEE. The 178-residue stretch at 543 to 720 folds into the W2 domain; that stretch reads GSPQMDDIKV…KEAEEESSED (178 aa). Ser544 is subject to Phosphoserine; by DYRK2. Ser717 carries the phosphoserine modification.

It belongs to the eIF-2B gamma/epsilon subunits family. In terms of assembly, component of the translation initiation factor 2B (eIF2B) complex which is a heterodecamer of two sets of five different subunits: alpha, beta, gamma, delta and epsilon. Subunits alpha, beta and delta comprise a regulatory subcomplex and subunits epsilon and gamma comprise a catalytic subcomplex. Within the complex, the hexameric regulatory complex resides at the center, with the two heterodimeric catalytic subcomplexes bound on opposite sides. In terms of processing, phosphorylated at Ser-544 by DYRK2; this is required for subsequent phosphorylation by GSK3B. Phosphorylated on serine and threonine residues by GSK3B; phosphorylation inhibits its function. Polyubiquitinated, probably by NEDD4.

The protein localises to the cytoplasm. It localises to the cytosol. With respect to regulation, activated by the chemical integrated stress response (ISR) inhibitor ISRIB which stimulates guanine nucleotide exchange factor activity for both phosphorylated and unphosphorylated eIF2. Acts as a component of the translation initiation factor 2B (eIF2B) complex, which catalyzes the exchange of GDP for GTP on eukaryotic initiation factor 2 (eIF2) gamma subunit. Its guanine nucleotide exchange factor activity is repressed when bound to eIF2 complex phosphorylated on the alpha subunit, thereby limiting the amount of methionyl-initiator methionine tRNA available to the ribosome and consequently global translation is repressed. The chain is Translation initiation factor eIF2B subunit epsilon (EIF2B5) from Homo sapiens (Human).